The following is a 92-amino-acid chain: MAHTRSAKKRIRQAEKRRLLNRYHISRMKTAIKRITEALKNKDIETAEKLLPLAQKLAYRAAAKGAIHKNEAARRVSRIYRKVNAAKASLSQ.

The protein belongs to the bacterial ribosomal protein bS20 family.

Its function is as follows. Binds directly to 16S ribosomal RNA. This is Small ribosomal subunit protein bS20 from Persephonella marina (strain DSM 14350 / EX-H1).